The following is a 295-amino-acid chain: Ribosomal protein L11 methyltransferase (295 aa).

S-adenosyl-L-methionine-binding residues include threonine 145, glycine 166, aspartate 188, and asparagine 230.

This sequence belongs to the methyltransferase superfamily. PrmA family.

The protein resides in the cytoplasm. It carries out the reaction L-lysyl-[protein] + 3 S-adenosyl-L-methionine = N(6),N(6),N(6)-trimethyl-L-lysyl-[protein] + 3 S-adenosyl-L-homocysteine + 3 H(+). Methylates ribosomal protein L11. In Pectobacterium atrosepticum (strain SCRI 1043 / ATCC BAA-672) (Erwinia carotovora subsp. atroseptica), this protein is Ribosomal protein L11 methyltransferase.